Here is a 160-residue protein sequence, read N- to C-terminus: 2-C-methyl-D-erythritol 2,4-cyclodiphosphate synthase (160 aa).

Residues Asp12 and His14 each contribute to the a divalent metal cation site. Residues 12 to 14 and 38 to 39 each bind 4-CDP-2-C-methyl-D-erythritol 2-phosphate; these read DVH and HS. An a divalent metal cation-binding site is contributed by His46. Residues 60–62, 65–69, 136–139, Phe143, and Arg146 contribute to the 4-CDP-2-C-methyl-D-erythritol 2-phosphate site; these read DIG, FPDTD, and TTTE.

Belongs to the IspF family. Homotrimer. The cofactor is a divalent metal cation.

It catalyses the reaction 4-CDP-2-C-methyl-D-erythritol 2-phosphate = 2-C-methyl-D-erythritol 2,4-cyclic diphosphate + CMP. The protein operates within isoprenoid biosynthesis; isopentenyl diphosphate biosynthesis via DXP pathway; isopentenyl diphosphate from 1-deoxy-D-xylulose 5-phosphate: step 4/6. Involved in the biosynthesis of isopentenyl diphosphate (IPP) and dimethylallyl diphosphate (DMAPP), two major building blocks of isoprenoid compounds. Catalyzes the conversion of 4-diphosphocytidyl-2-C-methyl-D-erythritol 2-phosphate (CDP-ME2P) to 2-C-methyl-D-erythritol 2,4-cyclodiphosphate (ME-CPP) with a corresponding release of cytidine 5-monophosphate (CMP). The polypeptide is 2-C-methyl-D-erythritol 2,4-cyclodiphosphate synthase (Acinetobacter baumannii (strain AB307-0294)).